Consider the following 756-residue polypeptide: 1,4-alpha-glucan branching enzyme GlgB (756 aa).

Aspartate 431 (nucleophile) is an active-site residue. Glutamate 484 acts as the Proton donor in catalysis.

The protein belongs to the glycosyl hydrolase 13 family. GlgB subfamily. In terms of assembly, monomer.

It catalyses the reaction Transfers a segment of a (1-&gt;4)-alpha-D-glucan chain to a primary hydroxy group in a similar glucan chain.. Its pathway is glycan biosynthesis; glycogen biosynthesis. Catalyzes the formation of the alpha-1,6-glucosidic linkages in glycogen by scission of a 1,4-alpha-linked oligosaccharide from growing alpha-1,4-glucan chains and the subsequent attachment of the oligosaccharide to the alpha-1,6 position. In Prochlorococcus marinus (strain MIT 9303), this protein is 1,4-alpha-glucan branching enzyme GlgB.